A 510-amino-acid polypeptide reads, in one-letter code: ATP synthase subunit alpha (510 aa).

Residue 169 to 176 coordinates ATP; that stretch reads GDRQTGKT.

Belongs to the ATPase alpha/beta chains family. F-type ATPases have 2 components, CF(1) - the catalytic core - and CF(0) - the membrane proton channel. CF(1) has five subunits: alpha(3), beta(3), gamma(1), delta(1), epsilon(1). CF(0) has three main subunits: a(1), b(2) and c(9-12). The alpha and beta chains form an alternating ring which encloses part of the gamma chain. CF(1) is attached to CF(0) by a central stalk formed by the gamma and epsilon chains, while a peripheral stalk is formed by the delta and b chains.

It is found in the cell inner membrane. It carries out the reaction ATP + H2O + 4 H(+)(in) = ADP + phosphate + 5 H(+)(out). In terms of biological role, produces ATP from ADP in the presence of a proton gradient across the membrane. The alpha chain is a regulatory subunit. This chain is ATP synthase subunit alpha, found in Rickettsia conorii (strain ATCC VR-613 / Malish 7).